The chain runs to 202 residues: Phospholipase A2 inhibitor gamma subunit A (202 aa).

Positions 1–19 (MKSLQIICLLFIFVARGSC) are cleaved as a signal peptide. Disulfide bonds link Cys22–Cys47, Cys25–Cys32, Cys40–Cys68, Cys74–Cys95, Cys96–Cys101, Cys119–Cys144, Cys137–Cys166, and Cys170–Cys192. A glycan (N-linked (GlcNAc...) asparagine) is linked at Asn177.

The protein belongs to the CNF-like-inhibitor family. Heterodimer of subunit A and subunit B. In terms of processing, N-glycosylated. In terms of tissue distribution, expressed by the liver. Not expressed in esophagus, stomach, pancreas, spleen, gall bladder, small intestine, rectum, kidney, trachea, lung, testis and body fat.

It is found in the secreted. Inhibits the enzymatic activity of all phospholipase A2 (PA2) groups. The sequence is that of Phospholipase A2 inhibitor gamma subunit A from Elaphe quadrivirgata (Japanese four-lined ratsnake).